Reading from the N-terminus, the 466-residue chain is ATP synthase subunit beta (466 aa).

An ATP-binding site is contributed by 155–162 (GGAGVGKT).

The protein belongs to the ATPase alpha/beta chains family. In terms of assembly, F-type ATPases have 2 components, CF(1) - the catalytic core - and CF(0) - the membrane proton channel. CF(1) has five subunits: alpha(3), beta(3), gamma(1), delta(1), epsilon(1). CF(0) has three main subunits: a(1), b(2) and c(9-12). The alpha and beta chains form an alternating ring which encloses part of the gamma chain. CF(1) is attached to CF(0) by a central stalk formed by the gamma and epsilon chains, while a peripheral stalk is formed by the delta and b chains.

Its subcellular location is the cell inner membrane. The catalysed reaction is ATP + H2O + 4 H(+)(in) = ADP + phosphate + 5 H(+)(out). Functionally, produces ATP from ADP in the presence of a proton gradient across the membrane. The catalytic sites are hosted primarily by the beta subunits. The sequence is that of ATP synthase subunit beta from Aromatoleum aromaticum (strain DSM 19018 / LMG 30748 / EbN1) (Azoarcus sp. (strain EbN1)).